The following is a 97-amino-acid chain: Co-chaperonin GroES (97 aa).

Belongs to the GroES chaperonin family. Heptamer of 7 subunits arranged in a ring. Interacts with the chaperonin GroEL.

The protein localises to the cytoplasm. Together with the chaperonin GroEL, plays an essential role in assisting protein folding. The GroEL-GroES system forms a nano-cage that allows encapsulation of the non-native substrate proteins and provides a physical environment optimized to promote and accelerate protein folding. GroES binds to the apical surface of the GroEL ring, thereby capping the opening of the GroEL channel. This Buchnera aphidicola subsp. Tetraneura caerulescens protein is Co-chaperonin GroES.